The chain runs to 125 residues: uncharacterized protein (125 aa).

The next 2 helical transmembrane spans lie at 22–44 (TPLMVLIFFMVIDYLGDIVNAAV) and 54–73 (YMGIAKIVSVLVVIIVSVLM).

This sequence belongs to the bacteriophage holin family. Cp-1 holin subfamily.

The protein resides in the cell membrane. This is an uncharacterized protein from Clostridium acetobutylicum (strain ATCC 824 / DSM 792 / JCM 1419 / IAM 19013 / LMG 5710 / NBRC 13948 / NRRL B-527 / VKM B-1787 / 2291 / W).